The following is a 333-amino-acid chain: 4-hydroxyproline epimerase (333 aa).

Residue Cys90 is the Proton acceptor of the active site. Substrate-binding positions include 91 to 92 and Asp249; that span reads GH. Cys253 functions as the Proton donor in the catalytic mechanism. 254-255 serves as a coordination point for substrate; the sequence is GT.

This sequence belongs to the proline racemase family. Homodimer.

It carries out the reaction trans-4-hydroxy-L-proline = cis-4-hydroxy-D-proline. Its function is as follows. Allows intracellular utilization of 4-hydroxyproline, one of the major constituents of host collagen, by converting 4-hydroxy-L-proline to 4-hydroxy-D-proline, which can be further metabolized by intracellular 4-hydroxy-D-proline oxidases. Strong B-cell mitogen. Plays an important role in the regulation of intra- and extracellular amino acid pools, allowing the bacterium to profit from host precursors and enzymatic pathways. The sequence is that of 4-hydroxyproline epimerase from Brucella suis (strain ATCC 23445 / NCTC 10510).